Reading from the N-terminus, the 97-residue chain is Putative membrane protein insertion efficiency factor (97 aa).

The segment at 68 to 97 (VPGTELNTAPRSGQACNPTESTHSTTQTRH) is disordered. A compositionally biased stretch (polar residues) spans 72–97 (ELNTAPRSGQACNPTESTHSTTQTRH).

This sequence belongs to the UPF0161 family.

The protein localises to the cell inner membrane. In terms of biological role, could be involved in insertion of integral membrane proteins into the membrane. The sequence is that of Putative membrane protein insertion efficiency factor from Marinobacter nauticus (strain ATCC 700491 / DSM 11845 / VT8) (Marinobacter aquaeolei).